The following is a 170-amino-acid chain: Protein AIG2 A (170 aa).

Position 15-20 (15-20 (YGSFQE)) interacts with substrate. Residue Glu-83 is the Proton acceptor of the active site. Positions 147–162 (KNPNGRSREEFEKFVQ) are enriched in basic and acidic residues. Residues 147-170 (KNPNGRSREEFEKFVQDDSSPASA) form a disordered region.

Belongs to the gamma-glutamylcyclotransferase family. As to expression, ubiquitous.

In terms of biological role, putative gamma-glutamylcyclotransferase. In Arabidopsis thaliana (Mouse-ear cress), this protein is Protein AIG2 A.